The following is an 886-amino-acid chain: Microsomal triglyceride transfer protein (886 aa).

The N-terminal stretch at 1-24 (MLRLAGLLLCVTSFLSTSSLGANA) is a signal peptide. The Vitellogenin domain maps to 28–662 (LDNDRLYRYS…QSNNALLHGL (635 aa)). 2 disulfide bridges follow: Cys-174/Cys-194 and Cys-440/Cys-445.

As to quaternary structure, heterodimer; heterodimerizes with the protein disulfide isomerase. Interacts with apolipoprotein B.

Its subcellular location is the endoplasmic reticulum. Catalyzes the transport of triglyceride, cholesteryl ester, and phospholipid between phospholipid surfaces. Required for the secretion of plasma lipoproteins that contain apolipoprotein B. In Megalobrama amblycephala (Chinese blunt snout bream), this protein is Microsomal triglyceride transfer protein.